Reading from the N-terminus, the 214-residue chain is MPLVALGVADLFNFVDYSKTSLAISAAAIAFNPTFWNIVARREYRTKFLTRAFGGNAQVACYFLAVTIFGLGLVRDFLYERALRDQPSHPLLEGTYVKYAAYALLALGNLLVITSTMRLGITGTFLGDYFGILMDGIVTGFPFNVTSAPMYYGSTMSFLGTALLYGKPAGLLLTAWVLFVYIIAIQFENPFTAEIYAKRDRERAKAAGTSKKEL.

The Lumenal segment spans residues 1-19; that stretch reads MPLVALGVADLFNFVDYSK. The helical intramembrane region spans 20-40; the sequence is TSLAISAAAIAFNPTFWNIVA. Topologically, residues 41-52 are lumenal; sequence RREYRTKFLTRA. The chain crosses the membrane as a helical span at residues 53-74; that stretch reads FGGNAQVACYFLAVTIFGLGLV. The Cytoplasmic segment spans residues 75-101; that stretch reads RDFLYERALRDQPSHPLLEGTYVKYAA. Residues 102–122 traverse the membrane as a helical segment; it reads YALLALGNLLVITSTMRLGIT. 106-108 provides a ligand contact to S-adenosyl-L-methionine; that stretch reads ALG. Topologically, residues 123–165 are lumenal; the sequence is GTFLGDYFGILMDGIVTGFPFNVTSAPMYYGSTMSFLGTALLY. The chain crosses the membrane as a helical span at residues 166–186; it reads GKPAGLLLTAWVLFVYIIAIQ. The Cytoplasmic portion of the chain corresponds to 187 to 214; it reads FENPFTAEIYAKRDRERAKAAGTSKKEL. 188–189 contributes to the S-adenosyl-L-methionine binding site; it reads EN.

This sequence belongs to the class VI-like SAM-binding methyltransferase superfamily. PEMT/PEM2 methyltransferase family.

Its subcellular location is the endoplasmic reticulum membrane. It is found in the mitochondrion membrane. It carries out the reaction a 1,2-diacyl-sn-glycero-3-phospho-N-methylethanolamine + S-adenosyl-L-methionine = a 1,2-diacyl-sn-glycero-3-phospho-N,N-dimethylethanolamine + S-adenosyl-L-homocysteine + H(+). The enzyme catalyses a 1,2-diacyl-sn-glycero-3-phospho-N,N-dimethylethanolamine + S-adenosyl-L-methionine = a 1,2-diacyl-sn-glycero-3-phosphocholine + S-adenosyl-L-homocysteine + H(+). It participates in phospholipid metabolism; phosphatidylcholine biosynthesis. Its function is as follows. Catalyzes the second two steps of the methylation pathway of phosphatidylcholine biosynthesis, the SAM-dependent methylation of phosphatidylmonomethylethanolamine (PMME) to phosphatidyldimethylethanolamine (PDME) and of PDME to phosphatidylcholine (PC). This Neurospora crassa (strain ATCC 24698 / 74-OR23-1A / CBS 708.71 / DSM 1257 / FGSC 987) protein is Phosphatidyl-N-methylethanolamine N-methyltransferase.